Here is a 454-residue protein sequence, read N- to C-terminus: Bifunctional protein GlmU (454 aa).

The pyrophosphorylase stretch occupies residues 1 to 228 (MSPLHVVILA…PFEVQGVNNR (228 aa)). Residues 9–12 (LAAG), K23, Q74, 79–80 (GT), 101–103 (YGD), G138, E153, N168, and N226 contribute to the UDP-N-acetyl-alpha-D-glucosamine site. A Mg(2+)-binding site is contributed by D103. N226 is a Mg(2+) binding site. The segment at 229 to 249 (LQLAELERWYQRQQAERLMTE) is linker. Residues 250-454 (GASLADPARI…IAGWERPKKA (205 aa)) form an N-acetyltransferase region. The UDP-N-acetyl-alpha-D-glucosamine site is built by R332 and K350. H362 serves as the catalytic Proton acceptor. UDP-N-acetyl-alpha-D-glucosamine-binding residues include Y365 and N376. Acetyl-CoA is bound by residues A379, 385 to 386 (NY), S404, A422, and R439.

In the N-terminal section; belongs to the N-acetylglucosamine-1-phosphate uridyltransferase family. It in the C-terminal section; belongs to the transferase hexapeptide repeat family. Homotrimer. Mg(2+) is required as a cofactor.

The protein localises to the cytoplasm. The catalysed reaction is alpha-D-glucosamine 1-phosphate + acetyl-CoA = N-acetyl-alpha-D-glucosamine 1-phosphate + CoA + H(+). It catalyses the reaction N-acetyl-alpha-D-glucosamine 1-phosphate + UTP + H(+) = UDP-N-acetyl-alpha-D-glucosamine + diphosphate. Its pathway is nucleotide-sugar biosynthesis; UDP-N-acetyl-alpha-D-glucosamine biosynthesis; N-acetyl-alpha-D-glucosamine 1-phosphate from alpha-D-glucosamine 6-phosphate (route II): step 2/2. The protein operates within nucleotide-sugar biosynthesis; UDP-N-acetyl-alpha-D-glucosamine biosynthesis; UDP-N-acetyl-alpha-D-glucosamine from N-acetyl-alpha-D-glucosamine 1-phosphate: step 1/1. It functions in the pathway bacterial outer membrane biogenesis; LPS lipid A biosynthesis. Catalyzes the last two sequential reactions in the de novo biosynthetic pathway for UDP-N-acetylglucosamine (UDP-GlcNAc). The C-terminal domain catalyzes the transfer of acetyl group from acetyl coenzyme A to glucosamine-1-phosphate (GlcN-1-P) to produce N-acetylglucosamine-1-phosphate (GlcNAc-1-P), which is converted into UDP-GlcNAc by the transfer of uridine 5-monophosphate (from uridine 5-triphosphate), a reaction catalyzed by the N-terminal domain. This is Bifunctional protein GlmU from Marinobacter nauticus (strain ATCC 700491 / DSM 11845 / VT8) (Marinobacter aquaeolei).